We begin with the raw amino-acid sequence, 307 residues long: MTSKIKCALIGSGNIGTDLLYKLLRSDVLEPVWMVGIDPDSDGLAKAKAAGLKVTADGIDGLLPFVEADEIKIAFDATSAYVHAENSRKLNELGVVMIDLTPAAIGPFCVPPVNLEQLDENINNINMVTCGGQATIPMVAAVSQVQAVEYGEIVATVSSRSVGPGTRQNIDEFTRTTAGAVEQIGGAEKGKAIIVINPAEPPLLMRDTIHCLTKDQPDEQAITASVHKMIEQVQQYVPGYTLKNGPVFDGRKVTIFLEVEGLGDYLPKYAGNLDIMTAAAARTAEMLASKMLNVKTHLNVTKEAALA.

Residue 12 to 15 participates in NAD(+) binding; that stretch reads SGNI. Catalysis depends on Cys130, which acts as the Acyl-thioester intermediate. NAD(+)-binding positions include 161-169 and Asn272; that span reads SVGPGTRQN.

Belongs to the acetaldehyde dehydrogenase family.

It catalyses the reaction acetaldehyde + NAD(+) + CoA = acetyl-CoA + NADH + H(+). The protein is Acetaldehyde dehydrogenase of Shewanella pealeana (strain ATCC 700345 / ANG-SQ1).